The following is a 188-amino-acid chain: Xanthine phosphoribosyltransferase (188 aa).

2 residues coordinate xanthine: Leu-20 and Asn-27. 127–131 (ANGNA) lines the 5-phospho-alpha-D-ribose 1-diphosphate pocket. Lys-155 is a binding site for xanthine.

The protein belongs to the purine/pyrimidine phosphoribosyltransferase family. Xpt subfamily. Homodimer.

Its subcellular location is the cytoplasm. It catalyses the reaction XMP + diphosphate = xanthine + 5-phospho-alpha-D-ribose 1-diphosphate. It functions in the pathway purine metabolism; XMP biosynthesis via salvage pathway; XMP from xanthine: step 1/1. Its function is as follows. Converts the preformed base xanthine, a product of nucleic acid breakdown, to xanthosine 5'-monophosphate (XMP), so it can be reused for RNA or DNA synthesis. In Phocaeicola vulgatus (strain ATCC 8482 / DSM 1447 / JCM 5826 / CCUG 4940 / NBRC 14291 / NCTC 11154) (Bacteroides vulgatus), this protein is Xanthine phosphoribosyltransferase.